The sequence spans 105 residues: uncharacterized protein (105 aa).

2 helical membrane passes run 56 to 76 and 85 to 105; these read ALIW…VLII and INLN…GVFY.

Its subcellular location is the membrane. This is an uncharacterized protein from Aedes vexans (Inland floodwater mosquito).